Reading from the N-terminus, the 77-residue chain is uncharacterized protein (77 aa).

The disordered stretch occupies residues 54–77 (HHGRKHKEDMEARHEQLTKGGTIL). Over residues 59–70 (HKEDMEARHEQL) the composition is skewed to basic and acidic residues.

This is an uncharacterized protein from Escherichia coli O157:H7.